Reading from the N-terminus, the 559-residue chain is Leucine-rich repeat-containing protein 71 (559 aa).

Residues 1 to 18 show a composition bias toward low complexity; that stretch reads MSSEQSAPGASPRAPRPG. Residues 1 to 56 are disordered; sequence MSSEQSAPGASPRAPRPGTQKSSGAVTKKGERAAKEKPATVLPPVGEEEPKSPEEY. Residues 28-38 are compositionally biased toward basic and acidic residues; it reads KKGERAAKEKP. 5 LRR repeats span residues 172 to 193, 196 to 216, 221 to 241, 253 to 266, and 281 to 302; these read NLWK…LPLC, TLRK…HKLM, TIAH…QLLG, TLVS…HIGD, and SLLW…KLAE. Composition is skewed to basic and acidic residues over residues 324–348 and 380–391; these read KGTQ…REKS and KSWELAKKEEKL. The disordered stretch occupies residues 324–427; sequence KGTQERSRSP…PEQKPSRAKG (104 aa).

In Homo sapiens (Human), this protein is Leucine-rich repeat-containing protein 71 (LRRC71).